A 264-amino-acid polypeptide reads, in one-letter code: MAATGEALTPQGYIQHHLTNLSVGEGFWTWHIDSLLFSVGLGVLFLWIFRSVGKKATTGVPGKLQCFVEMIVEFVDNSVKETFHGRNALIAPLALTIFVWVFMMNFMDMVPVDWLPHTAAMLGVPYLKVVPTTDLNITFSLALGVFLLIIYYSIKVKGVSGFVKELTLQPFNHWAMIPVNLLLESVTLIAKPISLALRLFGNLYAGELIFILIALMYGANWLIASLGVTLQLGWLIFHILVITLQAFIFMMLTIVYLSMAHEDH.

Helical transmembrane passes span 29–49 (TWHI…LWIF), 87–107 (NALI…MNFM), 134–154 (DLNI…YYSI), 177–197 (IPVN…SLAL), 208–228 (LIFI…SLGV), and 235–255 (LIFH…LTIV).

Belongs to the ATPase A chain family. As to quaternary structure, F-type ATPases have 2 components, CF(1) - the catalytic core - and CF(0) - the membrane proton channel. CF(1) has five subunits: alpha(3), beta(3), gamma(1), delta(1), epsilon(1). CF(0) has three main subunits: a(1), b(2) and c(9-12). The alpha and beta chains form an alternating ring which encloses part of the gamma chain. CF(1) is attached to CF(0) by a central stalk formed by the gamma and epsilon chains, while a peripheral stalk is formed by the delta and b chains.

It localises to the cell inner membrane. Key component of the proton channel; it plays a direct role in the translocation of protons across the membrane. This is ATP synthase subunit a from Shewanella amazonensis (strain ATCC BAA-1098 / SB2B).